Reading from the N-terminus, the 564-residue chain is MFS-type efflux pump LUC4 (564 aa).

The span at 1-15 shows a compositional bias: polar residues; it reads MGQSQDNTQLTTASP. Residues 1–35 are disordered; that stretch reads MGQSQDNTQLTTASPQAEKDLSSNDNPPESEPAAP. Transmembrane regions (helical) follow at residues 42–62, 78–98, 108–128, 141–161, and 170–190; these read WLVF…TSII, LYVW…PIFA, SLTL…GGAH, GVGG…MVSV, and IIGG…GAFA. A glycan (N-linked (GlcNAc...) asparagine) is linked at Asn-192. 3 helical membrane-spanning segments follow: residues 197–217, 236–256, and 268–288; these read WIFY…IVFL, WGGS…LSWG, and LVPL…QGAP. A glycan (N-linked (GlcNAc...) asparagine) is linked at Asn-302. Helical transmembrane passes span 308-328, 343-363, 371-391, 404-424, and 436-456; these read LFVI…FLPV, VMLF…GIFI, VWHF…TLLD, LLFG…ILAS, and AWTF…AAAF. Residue Asn-461 is glycosylated (N-linked (GlcNAc...) asparagine). A helical transmembrane segment spans residues 512–532; the sequence is KLVWQVSIAFSVLGFVLAFLV.

The protein belongs to the major facilitator superfamily. TCR/Tet family.

The protein localises to the membrane. Functionally, MFS-type efflux pump; part of the gene cluster that mediates the biosynthesis of the mycotoxin lucilactaene and the lucilactaene-related compound NG-391 that act as cell cycle inhibitors with potent growth inhibitory activity against malarial parasites, moderate growth inhibitory activity against cancer cells, and no activity against bacteria and fungi. In Fusarium sp, this protein is MFS-type efflux pump LUC4.